A 482-amino-acid polypeptide reads, in one-letter code: Membrane-bound lytic murein transglycosylase F (482 aa).

A signal peptide spans 1–13 (MKGLFLRIITALA). Residues 14 to 267 (LLFWAIDMVF…NLKEKYLGHI (254 aa)) form a non-LT domain region. The LT domain stretch occupies residues 268 to 482 (SQFDYVDTRS…NLEEIKENKD (215 aa)). Residue Glu-312 is part of the active site.

It in the N-terminal section; belongs to the bacterial solute-binding protein 3 family. The protein in the C-terminal section; belongs to the transglycosylase Slt family.

It localises to the cell outer membrane. It catalyses the reaction Exolytic cleavage of the (1-&gt;4)-beta-glycosidic linkage between N-acetylmuramic acid (MurNAc) and N-acetylglucosamine (GlcNAc) residues in peptidoglycan, from either the reducing or the non-reducing ends of the peptidoglycan chains, with concomitant formation of a 1,6-anhydrobond in the MurNAc residue.. Murein-degrading enzyme that degrades murein glycan strands and insoluble, high-molecular weight murein sacculi, with the concomitant formation of a 1,6-anhydromuramoyl product. Lytic transglycosylases (LTs) play an integral role in the metabolism of the peptidoglycan (PG) sacculus. Their lytic action creates space within the PG sacculus to allow for its expansion as well as for the insertion of various structures such as secretion systems and flagella. The sequence is that of Membrane-bound lytic murein transglycosylase F from Haemophilus influenzae (strain PittEE).